The chain runs to 60 residues: Large ribosomal subunit protein bL32 (60 aa).

The tract at residues 1–60 is disordered; sequence MAVQQNKKSPSKRGMHRSHNALTVPGIAVEPTTGETHLRHHISPNGFYRGRQVLKNKSEA. Residues 9 to 19 show a composition bias toward basic residues; the sequence is SPSKRGMHRSH.

Belongs to the bacterial ribosomal protein bL32 family.

In Paracidovorax citrulli (strain AAC00-1) (Acidovorax citrulli), this protein is Large ribosomal subunit protein bL32.